Here is a 482-residue protein sequence, read N- to C-terminus: ATP synthase subunit beta (482 aa).

An ATP-binding site is contributed by glycine 161–threonine 168.

The protein belongs to the ATPase alpha/beta chains family. F-type ATPases have 2 components, CF(1) - the catalytic core - and CF(0) - the membrane proton channel. CF(1) has five subunits: alpha(3), beta(3), gamma(1), delta(1), epsilon(1). CF(0) has three main subunits: a(1), b(2) and c(9-12). The alpha and beta chains form an alternating ring which encloses part of the gamma chain. CF(1) is attached to CF(0) by a central stalk formed by the gamma and epsilon chains, while a peripheral stalk is formed by the delta and b chains.

It localises to the cell inner membrane. It carries out the reaction ATP + H2O + 4 H(+)(in) = ADP + phosphate + 5 H(+)(out). Functionally, produces ATP from ADP in the presence of a proton gradient across the membrane. The catalytic sites are hosted primarily by the beta subunits. This chain is ATP synthase subunit beta, found in Solibacter usitatus (strain Ellin6076).